A 148-amino-acid polypeptide reads, in one-letter code: L-alanine exporter AlaE (148 aa).

4 helical membrane-spanning segments follow: residues 18–38 (FALVVYCFVIGMIIEIVISGM), 49–69 (VSIPVNILIAWPYGLYRDAFI), 88–108 (LLAYVSFQSPVYALILWSVGA), and 115–135 (TAVASNALVSMAMGVAYGYFL).

Belongs to the AlaE exporter family.

It is found in the cell inner membrane. Exports L-alanine. The polypeptide is L-alanine exporter AlaE (Yersinia enterocolitica subsp. palearctica serotype O:3 (strain DSM 13030 / CIP 106945 / Y11)).